The following is a 360-amino-acid chain: Phenylalanine--tRNA ligase alpha subunit (360 aa).

E260 contributes to the Mg(2+) binding site.

This sequence belongs to the class-II aminoacyl-tRNA synthetase family. Phe-tRNA synthetase alpha subunit type 1 subfamily. In terms of assembly, tetramer of two alpha and two beta subunits. Requires Mg(2+) as cofactor.

It localises to the cytoplasm. It catalyses the reaction tRNA(Phe) + L-phenylalanine + ATP = L-phenylalanyl-tRNA(Phe) + AMP + diphosphate + H(+). The polypeptide is Phenylalanine--tRNA ligase alpha subunit (Rhizobium etli (strain ATCC 51251 / DSM 11541 / JCM 21823 / NBRC 15573 / CFN 42)).